Reading from the N-terminus, the 557-residue chain is High-affinity hexose transporter ght4 (557 aa).

Topologically, residues 1–9 (MGRTLTSVL) are cytoplasmic. Residues 10-30 (VVFISMAGWLGGADTGSISGI) traverse the membrane as a helical segment. Topologically, residues 31–58 (LGMRDFQSRFADRYNPITNSYSYSAWRQ) are extracellular. Residues 59 to 79 (ALLTGTVNAGCLFGAMLSSPF) traverse the membrane as a helical segment. Residues 80 to 87 (TEAIGKKY) lie on the Cytoplasmic side of the membrane. Residues 88–108 (SIAFFSGCYIIGQILLVTAVP) traverse the membrane as a helical segment. Residues 109–112 (SWVQ) are Extracellular-facing. The helical transmembrane segment at 113-133 (IMVGKLFTGLTIGALSVLSPG) threads the bilayer. The Cytoplasmic portion of the chain corresponds to 134-144 (YQSEVAPPQIR). Residues 145 to 165 (GAVVSTYQLFQTCGTLIAACI) traverse the membrane as a helical segment. Topologically, residues 166-179 (NMGTHKLRKTASWR) are extracellular. A helical membrane pass occupies residues 180 to 200 (TSFGINILWGIFLMVGVLFLP). Residues 201 to 266 (ESPRYLIYKG…VFGKEVRYRT (66 aa)) are Cytoplasmic-facing. A helical membrane pass occupies residues 267-285 (VLGFLTMLLRELIGNNYYF). The Extracellular portion of the chain corresponds to 286–301 (YYATQVFKGTGMTDIF). Residues 302–322 (LPAVILGAINFGTTFGALYTI) traverse the membrane as a helical segment. Over 323 to 328 (DNLGRR) the chain is Cytoplasmic. A helical membrane pass occupies residues 329–349 (NPLIFGAAFQSICFFIYAAVG). Residues 350 to 363 (DRKLIYKNGTSDHR) are Extracellular-facing. N357 carries an N-linked (GlcNAc...) asparagine glycan. The chain crosses the membrane as a helical span at residues 364–384 (AGAVMIVFSCLFLFSYCCSWG). The Cytoplasmic portion of the chain corresponds to 385-404 (PMGWVIVGETFPIRYRSKCA). Residues 405–425 (AVATSGNWLGNFMVSFFTPFI) traverse the membrane as a helical segment. Residues 426 to 432 (SNSIGFK) are Extracellular-facing. Residues 433 to 453 (LGYIYACINMTSAFQIFLMAK) form a helical membrane-spanning segment. Topologically, residues 454-557 (ETKGLTLEEV…VSEESHPTWV (104 aa)) are cytoplasmic. The span at 492-514 (KEEEKREREKSKGYRGQEERFIE) shows a compositional bias: basic and acidic residues. Residues 492–557 (KEEEKREREK…VSEESHPTWV (66 aa)) form a disordered region. A compositionally biased stretch (low complexity) spans 524-536 (SSASSESFASAGA). Basic and acidic residues predominate over residues 547–557 (NVSEESHPTWV).

The protein belongs to the major facilitator superfamily. Sugar transporter (TC 2.A.1.1) family.

Its subcellular location is the membrane. This is High-affinity hexose transporter ght4 (ght4) from Schizosaccharomyces pombe (strain 972 / ATCC 24843) (Fission yeast).